A 123-amino-acid chain; its full sequence is Small ribosomal subunit protein uS12 (123 aa).

The disordered stretch occupies residues 1–27 (MPTIQQLIRKPRQPKIKRSKSMHLQEC). The span at 9–21 (RKPRQPKIKRSKS) shows a compositional bias: basic residues. Position 89 is a 3-methylthioaspartic acid (Asp-89).

Belongs to the universal ribosomal protein uS12 family. In terms of assembly, part of the 30S ribosomal subunit. Contacts proteins S8 and S17. May interact with IF1 in the 30S initiation complex.

Functionally, with S4 and S5 plays an important role in translational accuracy. Interacts with and stabilizes bases of the 16S rRNA that are involved in tRNA selection in the A site and with the mRNA backbone. Located at the interface of the 30S and 50S subunits, it traverses the body of the 30S subunit contacting proteins on the other side and probably holding the rRNA structure together. The combined cluster of proteins S8, S12 and S17 appears to hold together the shoulder and platform of the 30S subunit. The sequence is that of Small ribosomal subunit protein uS12 from Roseobacter denitrificans (strain ATCC 33942 / OCh 114) (Erythrobacter sp. (strain OCh 114)).